A 365-amino-acid polypeptide reads, in one-letter code: tRNA N6-adenosine threonylcarbamoyltransferase (365 aa).

Residues His122 and His126 each contribute to the Fe cation site. Residues 147–151 (LVSGG), Asp180, Gly193, and Asn293 contribute to the substrate site. Asp321 is a binding site for Fe cation. The disordered stretch occupies residues 340 to 365 (PNEIDTAARPRWPLSERTPATPEHVS).

This sequence belongs to the KAE1 / TsaD family. Requires Fe(2+) as cofactor.

Its subcellular location is the cytoplasm. The catalysed reaction is L-threonylcarbamoyladenylate + adenosine(37) in tRNA = N(6)-L-threonylcarbamoyladenosine(37) in tRNA + AMP + H(+). Required for the formation of a threonylcarbamoyl group on adenosine at position 37 (t(6)A37) in tRNAs that read codons beginning with adenine. Is involved in the transfer of the threonylcarbamoyl moiety of threonylcarbamoyl-AMP (TC-AMP) to the N6 group of A37, together with TsaE and TsaB. TsaD likely plays a direct catalytic role in this reaction. This Gluconobacter oxydans (strain 621H) (Gluconobacter suboxydans) protein is tRNA N6-adenosine threonylcarbamoyltransferase.